Reading from the N-terminus, the 402-residue chain is CCA-adding enzyme (402 aa).

Residues G32 and R35 each coordinate ATP. CTP contacts are provided by G32 and R35. 2 residues coordinate Mg(2+): D45 and D47. ATP-binding residues include R116, D159, R162, R165, and R168. Residues R116, D159, R162, R165, and R168 each contribute to the CTP site.

It belongs to the tRNA nucleotidyltransferase/poly(A) polymerase family. Bacterial CCA-adding enzyme type 3 subfamily. Homodimer. It depends on Mg(2+) as a cofactor.

It carries out the reaction a tRNA precursor + 2 CTP + ATP = a tRNA with a 3' CCA end + 3 diphosphate. The enzyme catalyses a tRNA with a 3' CCA end + 2 CTP + ATP = a tRNA with a 3' CCACCA end + 3 diphosphate. Catalyzes the addition and repair of the essential 3'-terminal CCA sequence in tRNAs without using a nucleic acid template. Adds these three nucleotides in the order of C, C, and A to the tRNA nucleotide-73, using CTP and ATP as substrates and producing inorganic pyrophosphate. tRNA 3'-terminal CCA addition is required both for tRNA processing and repair. Also involved in tRNA surveillance by mediating tandem CCA addition to generate a CCACCA at the 3' terminus of unstable tRNAs. While stable tRNAs receive only 3'-terminal CCA, unstable tRNAs are marked with CCACCA and rapidly degraded. This Streptococcus pyogenes serotype M4 (strain MGAS10750) protein is CCA-adding enzyme.